Reading from the N-terminus, the 137-residue chain is Large ribosomal subunit protein uL16 (137 aa).

The protein belongs to the universal ribosomal protein uL16 family. In terms of assembly, part of the 50S ribosomal subunit.

Its function is as follows. Binds 23S rRNA and is also seen to make contacts with the A and possibly P site tRNAs. The chain is Large ribosomal subunit protein uL16 from Nitratidesulfovibrio vulgaris (strain DSM 19637 / Miyazaki F) (Desulfovibrio vulgaris).